A 420-amino-acid chain; its full sequence is D-tagatose-1,6-bisphosphate aldolase subunit GatZ (420 aa).

This sequence belongs to the GatZ/KbaZ family. GatZ subfamily. Forms a complex with GatY.

It functions in the pathway carbohydrate metabolism; D-tagatose 6-phosphate degradation; D-glyceraldehyde 3-phosphate and glycerone phosphate from D-tagatose 6-phosphate: step 2/2. Component of the tagatose-1,6-bisphosphate aldolase GatYZ that is required for full activity and stability of the Y subunit. Could have a chaperone-like function for the proper and stable folding of GatY. When expressed alone, GatZ does not show any aldolase activity. Is involved in the catabolism of galactitol. This chain is D-tagatose-1,6-bisphosphate aldolase subunit GatZ, found in Escherichia coli O9:H4 (strain HS).